Reading from the N-terminus, the 173-residue chain is Photosystem I assembly protein Ycf3 (173 aa).

TPR repeat units follow at residues 35–68, 72–105, and 120–153; these read AYIY…EENK, GETL…NPKQ, and GRNA…YPGG.

The protein belongs to the Ycf3 family.

It is found in the cellular thylakoid membrane. In terms of biological role, essential for the assembly of the photosystem I (PSI) complex. May act as a chaperone-like factor to guide the assembly of the PSI subunits. The sequence is that of Photosystem I assembly protein Ycf3 from Prochlorococcus marinus (strain MIT 9312).